Reading from the N-terminus, the 348-residue chain is Dihydroorotase (348 aa).

Zn(2+) contacts are provided by His14 and His16. Residues 16 to 18 (HLR) and Asn42 each bind substrate. Zn(2+) is bound by residues Lys100, His137, and His175. Lys100 is modified (N6-carboxylysine). His137 is a binding site for substrate. Leu220 serves as a coordination point for substrate. Asp248 is a binding site for Zn(2+). Residue Asp248 is part of the active site. Substrate-binding residues include His252 and Ala264.

Belongs to the metallo-dependent hydrolases superfamily. DHOase family. Class II DHOase subfamily. As to quaternary structure, homodimer. The cofactor is Zn(2+).

It catalyses the reaction (S)-dihydroorotate + H2O = N-carbamoyl-L-aspartate + H(+). Its pathway is pyrimidine metabolism; UMP biosynthesis via de novo pathway; (S)-dihydroorotate from bicarbonate: step 3/3. Catalyzes the reversible cyclization of carbamoyl aspartate to dihydroorotate. This Pseudomonas fluorescens (strain ATCC BAA-477 / NRRL B-23932 / Pf-5) protein is Dihydroorotase.